Reading from the N-terminus, the 907-residue chain is Protein translocase subunit SecA (907 aa).

ATP is bound by residues Q87, 105 to 109, and D512; that span reads GEGKT. 4 residues coordinate Zn(2+): C891, C893, C902, and H903.

This sequence belongs to the SecA family. In terms of assembly, monomer and homodimer. Part of the essential Sec protein translocation apparatus which comprises SecA, SecYEG and auxiliary proteins SecDF-YajC and YidC. It depends on Zn(2+) as a cofactor.

Its subcellular location is the cell inner membrane. It localises to the cytoplasm. It catalyses the reaction ATP + H2O + cellular proteinSide 1 = ADP + phosphate + cellular proteinSide 2.. In terms of biological role, part of the Sec protein translocase complex. Interacts with the SecYEG preprotein conducting channel. Has a central role in coupling the hydrolysis of ATP to the transfer of proteins into and across the cell membrane, serving both as a receptor for the preprotein-SecB complex and as an ATP-driven molecular motor driving the stepwise translocation of polypeptide chains across the membrane. The polypeptide is Protein translocase subunit SecA (Shewanella loihica (strain ATCC BAA-1088 / PV-4)).